A 572-amino-acid polypeptide reads, in one-letter code: Putative lysozyme-like protein (572 aa).

The signal sequence occupies residues 1 to 17; that stretch reads MRLLLVLLALIFSVVSA. Low complexity predominate over residues 145-165; sequence MSSSGSSSSSGSSGSSSSSSG. 4 disordered regions span residues 145–199, 231–297, 326–388, and 433–469; these read MSSS…HGGG, SSSS…GGGV, ANSV…GERK, and AGSS…GGSG. Positions 166–185 are enriched in gly residues; it reads SSGGGSSGGGSGGGGGGSGL. The span at 231–240 shows a compositional bias: low complexity; that stretch reads SSSSADAGSS. Residues 258-282 show a composition bias toward gly residues; that stretch reads STGGTGGSSGSSGGGSGGGGGGSGL. A compositionally biased stretch (low complexity) spans 326-358; the sequence is ANSVSSLAGSMSSSGSSSSSGSSGSSSSSSSSG. The span at 359–382 shows a compositional bias: gly residues; the sequence is SSGGSSGGGSSGGGSGGGGGGSGL. Residues 433 to 452 are compositionally biased toward low complexity; that stretch reads AGSSSSSGSSGSSSSSSSSG. Gly residues predominate over residues 453 to 469; it reads SSGGSSGGSSGGGGGSG.

The protein belongs to the dictyostelium lysozyme family.

This Dictyostelium discoideum (Social amoeba) protein is Putative lysozyme-like protein (alyL).